Consider the following 667-residue polypeptide: Homeobox protein 3 (667 aa).

4 disordered regions span residues Phe44 to Ile108, Asn179 to Asn232, Asn249 to Asn268, and Ser331 to Gln418. Over residues Leu52 to Gln63 the composition is skewed to pro residues. Residues Cys75 to Thr96 are compositionally biased toward polar residues. Positions Ser97–Ile108 are enriched in low complexity. Basic residues predominate over residues Lys334–His343. A compositionally biased stretch (low complexity) spans Ser344 to Asn379. The span at Pro380–His390 shows a compositional bias: polar residues. The stretch at Gln386 to Phe454 forms a coiled coil. The segment at residues Glu602–Lys664 is a DNA-binding region (homeobox).

It is found in the nucleus. In terms of biological role, putative transcription factor. The polypeptide is Homeobox protein 3 (hbx3) (Dictyostelium discoideum (Social amoeba)).